The primary structure comprises 472 residues: Glutamate synthase [NADPH] small chain (472 aa).

The 32-residue stretch at 38–69 (GQAKAQADRCLSCGNPYCEWKCPVHNYIPNWL) folds into the 4Fe-4S ferredoxin-type domain. The [4Fe-4S] cluster site is built by C47, C50, C55, and C59.

In terms of assembly, aggregate of 4 catalytic active heterodimers, consisting of a large and a small subunit. Requires [4Fe-4S] cluster as cofactor.

It catalyses the reaction 2 L-glutamate + NADP(+) = L-glutamine + 2-oxoglutarate + NADPH + H(+). It functions in the pathway amino-acid biosynthesis; L-glutamate biosynthesis via GLT pathway; L-glutamate from 2-oxoglutarate and L-glutamine (NADP(+) route): step 1/1. The protein operates within energy metabolism; nitrogen metabolism. In terms of biological role, catalyzes the conversion of L-glutamine and 2-oxoglutarate into two molecules of L-glutamate. This Escherichia coli (strain K12) protein is Glutamate synthase [NADPH] small chain (gltD).